We begin with the raw amino-acid sequence, 141 residues long: Cystatin (141 aa).

The first 26 residues, M1 to M26, serve as a signal peptide directing secretion. The 101-residue stretch at G29 to W129 folds into the Cystatin domain. A Secondary area of contact motif is present at residues Q73–G77. 2 cysteine pairs are disulfide-bonded: C91-C107 and C120-C140.

This sequence belongs to the cystatin family. In terms of tissue distribution, expressed at a low level by the venom gland (at protein level).

It localises to the secreted. Its function is as follows. Inhibits various C1 cysteine proteases including cathepsin L, papain and cathepsin B. This protein has no toxic activity and its function in the venom is unknown. It may play a role as a housekeeping or regulatory protein. This is Cystatin from Micropechis ikaheca (New Guinean small-eyed snake).